The following is a 285-amino-acid chain: Phosphatidylglycerol--prolipoprotein diacylglyceryl transferase (285 aa).

4 helical membrane passes run 26 to 46, 71 to 91, 107 to 127, and 133 to 153; these read IALHWYGLGYVVGILFSWWYV, FVVWAALGIVVGGRLGQVLIW, WDGGMSFHGGLIGTTIAIIWF, and INIWAMFDTIAAGAPFGIGVV. Arg154 provides a ligand contact to a 1,2-diacyl-sn-glycero-3-phospho-(1'-sn-glycerol). The next 3 membrane-spanning stretches (helical) occupy residues 194-214, 218-238, and 256-276; these read LMEGFLLFIVLAFIIFAFKAF, GTVAGTFIISYGIARTISEIF, and GFTYGMALSLPMILFGFYAIF.

The protein belongs to the Lgt family.

Its subcellular location is the cell inner membrane. It catalyses the reaction L-cysteinyl-[prolipoprotein] + a 1,2-diacyl-sn-glycero-3-phospho-(1'-sn-glycerol) = an S-1,2-diacyl-sn-glyceryl-L-cysteinyl-[prolipoprotein] + sn-glycerol 1-phosphate + H(+). It participates in protein modification; lipoprotein biosynthesis (diacylglyceryl transfer). Its function is as follows. Catalyzes the transfer of the diacylglyceryl group from phosphatidylglycerol to the sulfhydryl group of the N-terminal cysteine of a prolipoprotein, the first step in the formation of mature lipoproteins. This Bartonella bacilliformis (strain ATCC 35685 / KC583 / Herrer 020/F12,63) protein is Phosphatidylglycerol--prolipoprotein diacylglyceryl transferase.